We begin with the raw amino-acid sequence, 432 residues long: Enolase (432 aa).

Residue Gln-163 coordinates (2R)-2-phosphoglycerate. Residue Glu-205 is the Proton donor of the active site. Positions 242, 288, and 315 each coordinate Mg(2+). 4 residues coordinate (2R)-2-phosphoglycerate: Lys-340, Arg-369, Ser-370, and Lys-391. Catalysis depends on Lys-340, which acts as the Proton acceptor.

The protein belongs to the enolase family. As to quaternary structure, homodimer. Mg(2+) is required as a cofactor.

The protein localises to the cytoplasm. It is found in the secreted. It localises to the cell surface. The enzyme catalyses (2R)-2-phosphoglycerate = phosphoenolpyruvate + H2O. Its pathway is carbohydrate degradation; glycolysis; pyruvate from D-glyceraldehyde 3-phosphate: step 4/5. The covalent binding to the substrate causes inactivation of the enzyme, and possibly serves as a signal for the export of the protein. Catalyzes the reversible conversion of 2-phosphoglycerate (2-PG) into phosphoenolpyruvate (PEP). It is essential for the degradation of carbohydrates via glycolysis. The protein is Enolase of Enterococcus hirae.